The following is a 92-amino-acid chain: Long neurotoxin 3FTx-Oxy1 (92 aa).

A signal peptide spans 1–21; the sequence is MKTLLLTLVVVTIVCLDLGYT. 5 disulfides stabilise this stretch: C24/C42, C35/C63, C48/C52, C67/C79, and C80/C85.

The protein belongs to the three-finger toxin family. Long-chain subfamily. Type II alpha-neurotoxin sub-subfamily. Expressed by the venom gland.

Its subcellular location is the secreted. Binds with high affinity to muscular (alpha-1/CHRNA1) and neuronal (alpha-7/CHRNA7) nicotinic acetylcholine receptor (nAChR) and inhibits acetylcholine from binding to the receptor, thereby impairing neuromuscular and neuronal transmission. The polypeptide is Long neurotoxin 3FTx-Oxy1 (Oxyuranus microlepidotus (Inland taipan)).